The following is a 130-amino-acid chain: S-protein homolog 32 (130 aa).

An N-terminal signal peptide occupies residues Met-1–Gly-21.

The protein belongs to the plant self-incompatibility (S1) protein family.

The protein localises to the secreted. This is S-protein homolog 32 from Arabidopsis thaliana (Mouse-ear cress).